The primary structure comprises 298 residues: Glycine--tRNA ligase alpha subunit (298 aa).

Belongs to the class-II aminoacyl-tRNA synthetase family. Tetramer of two alpha and two beta subunits.

Its subcellular location is the cytoplasm. It carries out the reaction tRNA(Gly) + glycine + ATP = glycyl-tRNA(Gly) + AMP + diphosphate. In Helicobacter pylori (strain Shi470), this protein is Glycine--tRNA ligase alpha subunit.